Consider the following 346-residue polypeptide: Probable RNA methyltransferase Pmen_2155 (346 aa).

The active-site Proton acceptor is the glutamate 91. Residues 94 to 320 (LLPRDGLCIS…TKVRNSAGQD (227 aa)) form the Radical SAM core domain. Cysteine 101 and cysteine 325 form a disulfide bridge. Residues cysteine 108, cysteine 112, and cysteine 115 each coordinate [4Fe-4S] cluster. S-adenosyl-L-methionine contacts are provided by residues 153–154 (GE), serine 183, 206–208 (SLH), and asparagine 282. The active-site S-methylcysteine intermediate is the cysteine 325.

Belongs to the radical SAM superfamily. RlmN family. The cofactor is [4Fe-4S] cluster.

It is found in the cytoplasm. This chain is Probable RNA methyltransferase Pmen_2155, found in Ectopseudomonas mendocina (strain ymp) (Pseudomonas mendocina).